Reading from the N-terminus, the 334-residue chain is MSDQANQGDLEIRPSPLLTVINDLHSKYKSLKEGIVANYIPELAKVNPDLFSISIVTVDGQVYQVGDYQQLFTIQSISKVFAYGLALEDHGRDYVLTRVGVEPTGEAFNSIILDEQSKRPYNPMVNAGAIATTSLIKGAGATERLNRVLEMFRRYIGHDVFVDISVFTSERSTGHRNRAMAHLMLNFGMIDRNLEEALDLYFQQCAVMVNCHDLAVMAATLANRGVNPVTGEQAVNSRYIKDILSVMYTCGMYNFAGEWAYKVGIPAKSGVCGGIMAVVPNQMGIAVFSPPLDIRGNSVRGVKVCEELSQQLGLHLFECVKVENGKWGVGNCEC.

7 residues coordinate substrate: serine 76, asparagine 126, glutamate 170, asparagine 177, tyrosine 201, tyrosine 253, and valine 271.

This sequence belongs to the glutaminase family. Homotetramer.

The catalysed reaction is L-glutamine + H2O = L-glutamate + NH4(+). In Trichormus variabilis (strain ATCC 29413 / PCC 7937) (Anabaena variabilis), this protein is Glutaminase.